The sequence spans 102 residues: uncharacterized protein (102 aa).

The disordered stretch occupies residues 1 to 71 (MKRMIRSHGR…GSANETSACT (71 aa)). Topologically, residues 1 to 79 (MKRMIRSHGR…CTRTDHQKAD (79 aa)) are extracellular. Polar residues predominate over residues 56-71 (SSGTRRGSANETSACT). N65 is a glycosylation site (N-linked (GlcNAc...) asparagine; by host). A helical membrane pass occupies residues 80–97 (IGLWFMFLVFGLCSWLAM). The Cytoplasmic portion of the chain corresponds to 98 to 102 (RYRAQ).

It belongs to the HHV-5 UL15A protein family.

It localises to the host membrane. This is an uncharacterized protein from Human cytomegalovirus (strain AD169) (HHV-5).